The chain runs to 120 residues: Prophage bactoprenol-linked glucose translocase homolog (120 aa).

Residues 1 to 9 (MLKLFAKYT) lie on the Cytoplasmic side of the membrane. Residues 10-30 (SIGVLNTLIHWVVFGVCIYVA) form a helical membrane-spanning segment. Residues 31–33 (HTN) lie on the Periplasmic side of the membrane. The chain crosses the membrane as a helical span at residues 34–54 (QALANFAGFVVAVSFSFFANA). The Cytoplasmic segment spans residues 55 to 64 (KFTFKASTTT). The chain crosses the membrane as a helical span at residues 65-85 (MRYMLYVGFMGTLSATVGWAA). Topologically, residues 86 to 88 (DRC) are periplasmic. A helical transmembrane segment spans residues 89–109 (ALPPMITLVTFSAISLVCGFV). The Cytoplasmic portion of the chain corresponds to 110–120 (YSKFIVFRDAK).

It belongs to the GtrA family.

It localises to the cell inner membrane. Functionally, involved in O antigen modification. Involved in the translocation of bactoprenol-linked glucose across the cytoplasmic membrane. The polypeptide is Prophage bactoprenol-linked glucose translocase homolog (yfdG) (Escherichia coli (strain K12)).